Reading from the N-terminus, the 304-residue chain is GMP synthase [glutamine-hydrolyzing] subunit B (304 aa).

The region spanning 2–183 is the GMPS ATP-PPase domain; the sequence is VKVEKFIPNA…LDLPEEICER (182 aa). ATP is bound at residue 28-34; it reads SGGVDSS.

As to quaternary structure, heterodimer composed of a glutamine amidotransferase subunit (A) and a GMP-binding subunit (B).

The catalysed reaction is XMP + L-glutamine + ATP + H2O = GMP + L-glutamate + AMP + diphosphate + 2 H(+). It functions in the pathway purine metabolism; GMP biosynthesis; GMP from XMP (L-Gln route): step 1/1. Functionally, catalyzes the synthesis of GMP from XMP. The chain is GMP synthase [glutamine-hydrolyzing] subunit B from Methanococcoides burtonii (strain DSM 6242 / NBRC 107633 / OCM 468 / ACE-M).